Here is a 456-residue protein sequence, read N- to C-terminus: High mobility group B protein 6 (456 aa).

Disordered stretches follow at residues Met1 to Lys42, Ser117 to Ser142, Ala238 to Pro258, and Met349 to Phe389. Residues Lys11 to Lys21 are compositionally biased toward basic residues. The HMG box 1 DNA-binding region spans Thr138–Lys206. The span at Gln240 to Lys254 shows a compositional bias: basic and acidic residues. The segment at residues Pro255–Lys321 is a DNA-binding region (HMG box 2). The span at Glu354–Glu363 shows a compositional bias: basic and acidic residues. The segment at residues Pro379–Asn447 is a DNA-binding region (HMG box 3).

Its subcellular location is the nucleus. The sequence is that of High mobility group B protein 6 (HMGB6) from Arabidopsis thaliana (Mouse-ear cress).